The sequence spans 74 residues: Large ribosomal subunit protein bL27c (74 aa).

The protein belongs to the bacterial ribosomal protein bL27 family.

The protein localises to the plastid. It is found in the chloroplast. In Calyptrosphaera sphaeroidea, this protein is Large ribosomal subunit protein bL27c (rpl27).